Reading from the N-terminus, the 160-residue chain is Lipoprotein signal peptidase (160 aa).

A run of 3 helical transmembrane segments spans residues 13–33 (IYIT…RLII), 72–92 (WFLS…ITKL), and 104–124 (SLII…GFVV). Active-site residues include aspartate 125 and aspartate 143. A helical membrane pass occupies residues 134–154 (WHFATFNIADCSIFIGIIILM).

The protein belongs to the peptidase A8 family.

The protein localises to the cell inner membrane. It carries out the reaction Release of signal peptides from bacterial membrane prolipoproteins. Hydrolyzes -Xaa-Yaa-Zaa-|-(S,diacylglyceryl)Cys-, in which Xaa is hydrophobic (preferably Leu), and Yaa (Ala or Ser) and Zaa (Gly or Ala) have small, neutral side chains.. Its pathway is protein modification; lipoprotein biosynthesis (signal peptide cleavage). In terms of biological role, this protein specifically catalyzes the removal of signal peptides from prolipoproteins. The sequence is that of Lipoprotein signal peptidase from Buchnera aphidicola subsp. Acyrthosiphon pisum (strain 5A).